The following is a 515-amino-acid chain: Maturase K (515 aa).

The protein belongs to the intron maturase 2 family. MatK subfamily.

The protein localises to the plastid. The protein resides in the chloroplast. In terms of biological role, usually encoded in the trnK tRNA gene intron. Probably assists in splicing its own and other chloroplast group II introns. In Pinus armandii (Chinese white pine), this protein is Maturase K.